The chain runs to 342 residues: MKVEDFDFDLPEELIAQTPLLDRTSSRLMVLDKKSGEIKDQHFTDILSYLNEGDALVLNDTRVLPARLHGTKDETGAHIEVLLLKQKEGNAWETLVKPAKRIRKGGTITFGNGALKATCLEELEHGGRILEFSYEGIFYEVLEQLGEMPLPPYIKEQLADQDRYQTVYAKENGSAAAPTAGLHFTEDLLAQISAKGVEIIFVTLHVGLGTFRPVDVEDTANHKMHSEFYRLTEDAANRINKIKATGGKVVAVGTTSIRTLETIASHNEGKLVAESGWTDIFISPGYTFQAVDALITNLHLPKSTLIMLVSALSNRTNILAAYNHAVEQQYRFFSFGDAMFIH.

It belongs to the QueA family. As to quaternary structure, monomer.

Its subcellular location is the cytoplasm. It carries out the reaction 7-aminomethyl-7-carbaguanosine(34) in tRNA + S-adenosyl-L-methionine = epoxyqueuosine(34) in tRNA + adenine + L-methionine + 2 H(+). Its pathway is tRNA modification; tRNA-queuosine biosynthesis. In terms of biological role, transfers and isomerizes the ribose moiety from AdoMet to the 7-aminomethyl group of 7-deazaguanine (preQ1-tRNA) to give epoxyqueuosine (oQ-tRNA). The sequence is that of S-adenosylmethionine:tRNA ribosyltransferase-isomerase from Listeria welshimeri serovar 6b (strain ATCC 35897 / DSM 20650 / CCUG 15529 / CIP 8149 / NCTC 11857 / SLCC 5334 / V8).